A 425-amino-acid polypeptide reads, in one-letter code: Serine--tRNA ligase (425 aa).

228–230 (TAE) serves as a coordination point for L-serine. An ATP-binding site is contributed by 259 to 261 (RSE). Position 282 (glutamate 282) interacts with L-serine. Residue 346–349 (EIAS) participates in ATP binding. Serine 382 provides a ligand contact to L-serine.

The protein belongs to the class-II aminoacyl-tRNA synthetase family. Type-1 seryl-tRNA synthetase subfamily. Homodimer. The tRNA molecule binds across the dimer.

The protein localises to the cytoplasm. The enzyme catalyses tRNA(Ser) + L-serine + ATP = L-seryl-tRNA(Ser) + AMP + diphosphate + H(+). It catalyses the reaction tRNA(Sec) + L-serine + ATP = L-seryl-tRNA(Sec) + AMP + diphosphate + H(+). The protein operates within aminoacyl-tRNA biosynthesis; selenocysteinyl-tRNA(Sec) biosynthesis; L-seryl-tRNA(Sec) from L-serine and tRNA(Sec): step 1/1. In terms of biological role, catalyzes the attachment of serine to tRNA(Ser). Is also able to aminoacylate tRNA(Sec) with serine, to form the misacylated tRNA L-seryl-tRNA(Sec), which will be further converted into selenocysteinyl-tRNA(Sec). This Rickettsia africae (strain ESF-5) protein is Serine--tRNA ligase.